The primary structure comprises 63 residues: DNA-directed RNA polymerase 7 kDa subunit (63 aa).

The protein belongs to the poxviridae DNA-directed RNA polymerase 7 kDa subunit family. As to quaternary structure, the DNA-dependent RNA polymerase used for intermediate and late genes expression consists of eight subunits 147 kDa, 133 kDa, 35 kDa, 30 kDa, 22 kDa, 19 kDa, 18 kDa and 7 kDa totalling more than 500 kDa in mass. The same holoenzyme, with the addition of the transcription-specificity factor RAP94, is used for early gene expression.

It is found in the virion. It carries out the reaction RNA(n) + a ribonucleoside 5'-triphosphate = RNA(n+1) + diphosphate. Its function is as follows. Part of the DNA-dependent RNA polymerase which catalyzes the transcription of viral DNA into RNA using the four ribonucleoside triphosphates as substrates. Responsible for the transcription of early, intermediate and late genes. DNA-dependent RNA polymerase associates with the early transcription factor (ETF) thereby allowing the early genes transcription. Late transcription, and probably also intermediate transcription, require newly synthesized RNA polymerase. This Fowlpox virus (strain NVSL) (FPV) protein is DNA-directed RNA polymerase 7 kDa subunit (RPO7).